The chain runs to 435 residues: Gamma-glutamyl phosphate reductase (435 aa).

The protein belongs to the gamma-glutamyl phosphate reductase family.

It is found in the cytoplasm. The enzyme catalyses L-glutamate 5-semialdehyde + phosphate + NADP(+) = L-glutamyl 5-phosphate + NADPH + H(+). It participates in amino-acid biosynthesis; L-proline biosynthesis; L-glutamate 5-semialdehyde from L-glutamate: step 2/2. Functionally, catalyzes the NADPH-dependent reduction of L-glutamate 5-phosphate into L-glutamate 5-semialdehyde and phosphate. The product spontaneously undergoes cyclization to form 1-pyrroline-5-carboxylate. The chain is Gamma-glutamyl phosphate reductase from Bradyrhizobium diazoefficiens (strain JCM 10833 / BCRC 13528 / IAM 13628 / NBRC 14792 / USDA 110).